The chain runs to 98 residues: HssA/B-like protein 36 (98 aa).

Positions 1–29 (MTLFSSISSISNPMTSSKSSISSFGSGTS) are disordered.

Belongs to the hssA/B family.

In Dictyostelium discoideum (Social amoeba), this protein is HssA/B-like protein 36 (hssl36).